The chain runs to 89 residues: MKLAAIFLVSCVLLSLLPSLTIAEKRPWCPTRKQIFDGSCNRTDYTQCFNDLRNTWDDIGDLCPTDCTCTPQPQNKRLCYCRYLPCPST.

An N-terminal signal peptide occupies residues 1-23; that stretch reads MKLAAIFLVSCVLLSLLPSLTIA. Cystine bridges form between Cys29–Cys86, Cys40–Cys69, Cys48–Cys79, and Cys67–Cys81.

The protein belongs to the DEFL family.

The protein localises to the secreted. This is Defensin-like protein 250 (SCRL8) from Arabidopsis thaliana (Mouse-ear cress).